Here is a 150-residue protein sequence, read N- to C-terminus: Flagellar assembly factor FliW (150 aa).

This sequence belongs to the FliW family. In terms of assembly, interacts with translational regulator CsrA. Interacts with flagellins FlaB1, FlaB2 and FlaB3.

It localises to the cytoplasm. Its function is as follows. Acts as an anti-CsrA protein, binds CsrA and prevents it from repressing translation of its target genes, one of which is flagellin. Binds to flagellin and participates in the assembly of the flagellum. Functionally, binds to the C-terminal region of flagellin, which is implicated in polymerization, and participates in the assembly of the flagellum. The polypeptide is Flagellar assembly factor FliW (Treponema pallidum (strain Nichols)).